We begin with the raw amino-acid sequence, 239 residues long: tRNA (guanine-N(1)-)-methyltransferase (239 aa).

S-adenosyl-L-methionine is bound by residues G113 and 133 to 138 (IGDYVL). Positions 218–239 (ERRPDLWAARATQNPPERKTNG) are disordered.

This sequence belongs to the RNA methyltransferase TrmD family. Homodimer.

It localises to the cytoplasm. It carries out the reaction guanosine(37) in tRNA + S-adenosyl-L-methionine = N(1)-methylguanosine(37) in tRNA + S-adenosyl-L-homocysteine + H(+). Its function is as follows. Specifically methylates guanosine-37 in various tRNAs. This chain is tRNA (guanine-N(1)-)-methyltransferase, found in Nitrobacter winogradskyi (strain ATCC 25391 / DSM 10237 / CIP 104748 / NCIMB 11846 / Nb-255).